Here is an 80-residue protein sequence, read N- to C-terminus: UPF0270 protein AHA_0994 (80 aa).

This sequence belongs to the UPF0270 family.

In Aeromonas hydrophila subsp. hydrophila (strain ATCC 7966 / DSM 30187 / BCRC 13018 / CCUG 14551 / JCM 1027 / KCTC 2358 / NCIMB 9240 / NCTC 8049), this protein is UPF0270 protein AHA_0994.